A 576-amino-acid chain; its full sequence is Rho GTPase-activating protein gacP (576 aa).

Residues 123-189 (LKSIIKTELK…RTNFERVGID (67 aa)) are a coiled coil. Residues 277-462 (EDLSVLLNRE…TIIQNFDRIF (186 aa)) form the Rho-GAP domain. Residues 472–576 (VPDTYVPPPN…DEGDAVELSD (105 aa)) form a disordered region. Residues 482 to 500 (NTRNNSVNNFNNVQPSSFS) are compositionally biased toward low complexity. Residues 501 to 513 (ASTSRSINLNKST) are compositionally biased toward polar residues. A compositionally biased stretch (low complexity) spans 514-530 (NNPNINDDNNNNNNINN). A compositionally biased stretch (acidic residues) spans 565 to 576 (SFDEGDAVELSD).

It is found in the cytoplasm. In terms of biological role, rho GTPase-activating protein involved in the signal transduction pathway. The polypeptide is Rho GTPase-activating protein gacP (gacP) (Dictyostelium discoideum (Social amoeba)).